Consider the following 335-residue polypeptide: Phospho-N-acetylmuramoyl-pentapeptide-transferase (335 aa).

The next 10 membrane-spanning stretches (helical) occupy residues 3–23, 53–73, 78–98, 118–138, 143–163, 174–194, 200–220, 226–246, 251–271, and 314–334; these read LTIL…PHFI, GGTV…LVYF, SLGL…IGFL, FTFQ…PSGI, VFGY…FWVV, GIDG…GVIA, FDVL…FLFN, IFMG…ISIA, WTLL…MLQV, and VDAF…AILY.

The protein belongs to the glycosyltransferase 4 family. MraY subfamily. The cofactor is Mg(2+).

Its subcellular location is the cell membrane. The enzyme catalyses UDP-N-acetyl-alpha-D-muramoyl-L-alanyl-gamma-D-glutamyl-L-lysyl-D-alanyl-D-alanine + di-trans,octa-cis-undecaprenyl phosphate = Mur2Ac(oyl-L-Ala-gamma-D-Glu-L-Lys-D-Ala-D-Ala)-di-trans,octa-cis-undecaprenyl diphosphate + UMP. Its pathway is cell wall biogenesis; peptidoglycan biosynthesis. Its function is as follows. Catalyzes the initial step of the lipid cycle reactions in the biosynthesis of the cell wall peptidoglycan: transfers peptidoglycan precursor phospho-MurNAc-pentapeptide from UDP-MurNAc-pentapeptide onto the lipid carrier undecaprenyl phosphate, yielding undecaprenyl-pyrophosphoryl-MurNAc-pentapeptide, known as lipid I. This Streptococcus equi subsp. equi (strain 4047) protein is Phospho-N-acetylmuramoyl-pentapeptide-transferase.